Here is a 112-residue protein sequence, read N- to C-terminus: Iron-sulfur cluster insertion protein ErpA (112 aa).

C40, C104, and C106 together coordinate iron-sulfur cluster.

The protein belongs to the HesB/IscA family. As to quaternary structure, homodimer. Requires iron-sulfur cluster as cofactor.

In terms of biological role, required for insertion of 4Fe-4S clusters for at least IspG. In Pseudoalteromonas translucida (strain TAC 125), this protein is Iron-sulfur cluster insertion protein ErpA.